A 365-amino-acid chain; its full sequence is Flagellar P-ring protein (365 aa).

The N-terminal stretch at Met1–Ala19 is a signal peptide.

The protein belongs to the FlgI family. As to quaternary structure, the basal body constitutes a major portion of the flagellar organelle and consists of four rings (L,P,S, and M) mounted on a central rod.

It localises to the periplasm. It is found in the bacterial flagellum basal body. Its function is as follows. Assembles around the rod to form the L-ring and probably protects the motor/basal body from shearing forces during rotation. The sequence is that of Flagellar P-ring protein from Sodalis glossinidius (strain morsitans).